We begin with the raw amino-acid sequence, 146 residues long: Hemoglobin subunit beta (146 aa).

V1 is subject to N-acetylvaline. Positions 2-146 constitute a Globin domain; sequence HLTPEEKNAV…VANALAHKYH (145 aa). T12 bears the Phosphothreonine mark. Position 44 is a phosphoserine (S44). K59 is subject to N6-acetyllysine. A heme b-binding site is contributed by H63. At K82 the chain carries N6-acetyllysine. Residue H92 participates in heme b binding. S-nitrosocysteine is present on C93. K144 carries the post-translational modification N6-acetyllysine.

Belongs to the globin family. Heterotetramer of two alpha chains and two beta chains. As to expression, red blood cells.

Involved in oxygen transport from the lung to the various peripheral tissues. This is Hemoglobin subunit beta (HBB) from Papio cynocephalus (Yellow baboon).